Here is a 318-residue protein sequence, read N- to C-terminus: Ubiquitin-like domain-containing CTD phosphatase 1 (318 aa).

The Ubiquitin-like domain occupies 3-81; sequence VSVIIKWGGQ…IMMMGTREES (79 aa). Positions 133–294 constitute an FCP1 homology domain; sequence PRPGKRLLVL…YKLSQYLKEI (162 aa). D143, D145, and D253 together coordinate Mg(2+).

It depends on Mg(2+) as a cofactor.

It is found in the nucleus. The enzyme catalyses O-phospho-L-seryl-[protein] + H2O = L-seryl-[protein] + phosphate. The catalysed reaction is O-phospho-L-threonyl-[protein] + H2O = L-threonyl-[protein] + phosphate. Dephosphorylates 26S nuclear proteasomes, thereby decreasing their proteolytic activity. Recruited to the 19S regulatory particle of the 26S proteasome where it dephosphorylates 19S component psmc2 which impairs psmc2 ATPase activity and disrupts 26S proteasome assembly. Has also been reported to stimulate the proteolytic activity of the 26S proteasome. The sequence is that of Ubiquitin-like domain-containing CTD phosphatase 1 (ublcp1) from Danio rerio (Zebrafish).